A 358-amino-acid chain; its full sequence is Phospho-N-acetylmuramoyl-pentapeptide-transferase (358 aa).

10 helical membrane passes run 24-44 (FRSIYAMITALLLAFIVGPWV), 73-93 (TMGGVLILVCIVVPTLLWADL), 95-115 (NVFIWLTLLIIVGYGVLGFVD), 134-154 (MFWQVLLAAGVGIFLFYLPGF), 169-189 (ELGILFIPFVTLVIVGASNAV), 197-217 (GLAIGPVAINAGTYLLFCYIA), 233-253 (GAGELAVLCGAMVGAGLGFLW), 261-281 (VFMGDVGSLSLGGALGTLAVL), 286-306 (ILLVIVGGVFVVEALSVIFQV), and 335-355 (KIIVRFWIITIILALVAISTL).

This sequence belongs to the glycosyltransferase 4 family. MraY subfamily. Requires Mg(2+) as cofactor.

Its subcellular location is the cell inner membrane. It catalyses the reaction UDP-N-acetyl-alpha-D-muramoyl-L-alanyl-gamma-D-glutamyl-meso-2,6-diaminopimeloyl-D-alanyl-D-alanine + di-trans,octa-cis-undecaprenyl phosphate = di-trans,octa-cis-undecaprenyl diphospho-N-acetyl-alpha-D-muramoyl-L-alanyl-D-glutamyl-meso-2,6-diaminopimeloyl-D-alanyl-D-alanine + UMP. It functions in the pathway cell wall biogenesis; peptidoglycan biosynthesis. Functionally, catalyzes the initial step of the lipid cycle reactions in the biosynthesis of the cell wall peptidoglycan: transfers peptidoglycan precursor phospho-MurNAc-pentapeptide from UDP-MurNAc-pentapeptide onto the lipid carrier undecaprenyl phosphate, yielding undecaprenyl-pyrophosphoryl-MurNAc-pentapeptide, known as lipid I. This is Phospho-N-acetylmuramoyl-pentapeptide-transferase from Geobacter sp. (strain M21).